The chain runs to 419 residues: Monooxygenase CTB7 (419 aa).

The protein belongs to the aromatic-ring hydroxylase family. KMO subfamily.

It participates in mycotoxin biosynthesis. Monooxygenase; part of the gene cluster that mediates the biosynthesis of cercosporin, a light-activated, non-host-selective toxin. The perylenequinone chromophore of cercosporin absorbs light energy to attain an electronically-activated triplet state and produces active oxygen species such as the hydroxyl radical, superoxide, hydrogen peroxide or singlet oxygen upon reaction with oxygen molecules. These reactive oxygen species cause damage to various cellular components including lipids, proteins and nucleic acids. The first step of cercosporin biosynthesis is performed by the polyketide synthase CTB1 which catalyzes the formation of nor-toralactone. The starter unit acyltransferase (SAT) domain of CTB1 initiates polyketide extension by the selective utilization of acetyl-CoA, which is elongated to the heptaketide in the beta-ketoacyl synthase (KS) domain by successive condensations with six malonyl units introduced by the malonyl acyltransferase (MAT) domain. The product template (PT) domain catalyzes C4-C9 and C2-C11 aldol cyclizations and dehydrations to a trihydroxynaphthalene, which is thought to be delivered to the thioesterase (TE) domain for product release. The bifunctional enzyme CTB3 then methylates nor-toralactone to toralactone before conducting an unusual oxidative aromatic ring opening. The O-methyltransferase CTB2 further methylates the nascent OH-6 of the CBT3 product, blocking further oxidation at this site before the reductase CTB6 reduces the 2-oxopropyl ketone at position C7, giving naphthalene. The FAD-dependent monooxygenase CTB5 in concert with the multicopper oxidase CTB12 are responsible for homodimerization of naphthalene with CTB7 installing the dioxepine moiety, finally producing cercosporin. The fasciclin domain-containing protein CTB11 might act with CTB5 and CTB12 whereas the roles of CTB9 and CTB10 have still to be elucidated. The polypeptide is Monooxygenase CTB7 (Cercospora beticola (Sugarbeet leaf spot fungus)).